Reading from the N-terminus, the 88-residue chain is Large ribosomal subunit protein bL27 (88 aa).

The interval 1–21 (MAHKKGTGSTRNGRDSRAQRL) is disordered.

The protein belongs to the bacterial ribosomal protein bL27 family.

In Picosynechococcus sp. (strain ATCC 27264 / PCC 7002 / PR-6) (Agmenellum quadruplicatum), this protein is Large ribosomal subunit protein bL27.